The sequence spans 207 residues: Thiamine-phosphate synthase (207 aa).

Residues 38 to 42 (QYRAK) and Asn-70 each bind 4-amino-2-methyl-5-(diphosphooxymethyl)pyrimidine. 2 residues coordinate Mg(2+): Asp-71 and Asp-90. Thr-109 contributes to the 4-amino-2-methyl-5-(diphosphooxymethyl)pyrimidine binding site. 135–137 (TNS) contributes to the 2-[(2R,5Z)-2-carboxy-4-methylthiazol-5(2H)-ylidene]ethyl phosphate binding site. Residue Lys-138 participates in 4-amino-2-methyl-5-(diphosphooxymethyl)pyrimidine binding. 2-[(2R,5Z)-2-carboxy-4-methylthiazol-5(2H)-ylidene]ethyl phosphate is bound by residues Gly-165 and 185 to 186 (IS).

The protein belongs to the thiamine-phosphate synthase family. Requires Mg(2+) as cofactor.

The catalysed reaction is 2-[(2R,5Z)-2-carboxy-4-methylthiazol-5(2H)-ylidene]ethyl phosphate + 4-amino-2-methyl-5-(diphosphooxymethyl)pyrimidine + 2 H(+) = thiamine phosphate + CO2 + diphosphate. It catalyses the reaction 2-(2-carboxy-4-methylthiazol-5-yl)ethyl phosphate + 4-amino-2-methyl-5-(diphosphooxymethyl)pyrimidine + 2 H(+) = thiamine phosphate + CO2 + diphosphate. It carries out the reaction 4-methyl-5-(2-phosphooxyethyl)-thiazole + 4-amino-2-methyl-5-(diphosphooxymethyl)pyrimidine + H(+) = thiamine phosphate + diphosphate. Its pathway is cofactor biosynthesis; thiamine diphosphate biosynthesis; thiamine phosphate from 4-amino-2-methyl-5-diphosphomethylpyrimidine and 4-methyl-5-(2-phosphoethyl)-thiazole: step 1/1. Its function is as follows. Condenses 4-methyl-5-(beta-hydroxyethyl)thiazole monophosphate (THZ-P) and 2-methyl-4-amino-5-hydroxymethyl pyrimidine pyrophosphate (HMP-PP) to form thiamine monophosphate (TMP). The chain is Thiamine-phosphate synthase from Clostridium perfringens (strain SM101 / Type A).